The chain runs to 772 residues: MLKLFSAFRKNKIWDFNGGIHPPEMKTQSNGTPLRQVPLAQRFVIPLKQHIGAEGELCVSVGDKVLRGQPLTRGRGKMLPVHAPTSGTVTAIAPHSTAHPSALAELSVIIDADGEDCWIPRDGWADYRSRRREELIERIHQFGVAGLGGAGFPTGVKLQGGGDKIETLIINAAECEPYITADDRLMQDCAAQVVEGIRILAHILQPREILIGIEDNKPQAISMLRAVLADSHDISLRVIPTKYPSGGAKQLTYILTGKQVPHGGRSSDIGVLMQNVGTAYAVKRAVIDGEPITERVVTLTGEAIARPGNVWARLGTPVRHLLNDAGFCPSADQMVIMGGPLMGLTLPWLDVPVVKITNCLLAPSANELGEPQEEQSCIRCSACADACPADLLPQQLYWFSKGQQHDKATTHNIADCIECGACAWVCPSNIPLVQYFRQEKAEIAAIRQEEKRAAEAKARFEARQARLEREKAARLERHKSAAVQPAAKDKDAIAAALARVKEKQAQATQPIVIKAGERPDNSAIIAAREARKAQARAKQAELQQTNDAATVTDPRKTAVEAAIARAKARKLEQQQANAEPEEQVDPRKAAVEAAIARAKARKLEQQQANAEPEEQVDPRKATVEAAIARAKARKLEQQQANAEPEEPVDPRKAAVEAAIARAKARKLEQQQANAEPEEPVDPRKAAVEAAIARAKARKLEQQQANAEPEEQVDPRKAAVEAAIARAKARKLEQQQANAEPEEQVDPRKAAVAAAIARVQAKKAAQQKVVNED.

2 4Fe-4S ferredoxin-type domains span residues glycine 369 to tyrosine 397 and lysine 407 to phenylalanine 436. Positions 377, 380, 383, 387, 416, 419, 422, and 426 each coordinate [4Fe-4S] cluster. Residues lysine 599–lysine 748 form a disordered region.

The protein belongs to the 4Fe4S bacterial-type ferredoxin family. RnfC subfamily. As to quaternary structure, the complex is composed of six subunits: RsxA, RsxB, RsxC, RsxD, RsxE and RsxG. Requires [4Fe-4S] cluster as cofactor.

The protein localises to the cell inner membrane. Its function is as follows. Part of a membrane-bound complex that couples electron transfer with translocation of ions across the membrane. Required to maintain the reduced state of SoxR. The protein is Ion-translocating oxidoreductase complex subunit C of Shigella dysenteriae serotype 1 (strain Sd197).